A 576-amino-acid polypeptide reads, in one-letter code: Arginine--tRNA ligase (576 aa).

Positions 123–133 match the 'HIGH' region motif; sequence PNIGKEMHVGH.

It belongs to the class-I aminoacyl-tRNA synthetase family. In terms of assembly, monomer.

The protein localises to the cytoplasm. The enzyme catalyses tRNA(Arg) + L-arginine + ATP = L-arginyl-tRNA(Arg) + AMP + diphosphate. The sequence is that of Arginine--tRNA ligase from Wigglesworthia glossinidia brevipalpis.